Reading from the N-terminus, the 122-residue chain is MSPKESIELQEFQSLLQDEAYEELINKKTYEAIKYRSNDGILPIIITLFIFSFVISRMIIFFISLFNKNTYCELPAVADAIINSIALVCIIVILYFSSRKLNVEIRRGEVEDYRANLERNQR.

Transmembrane regions (helical) follow at residues 43-63 and 76-96; these read PIII…IFFI and AVAD…ILYF.

The protein resides in the membrane. This is an uncharacterized protein from Schizosaccharomyces pombe (strain 972 / ATCC 24843) (Fission yeast).